The primary structure comprises 150 residues: MPIVDSGSVSPLSDAEKNKIRAAWDLVYKDYEKTGVDILVKFFTGTPAAQAFFPKFKGLTTADDLKQSSDVRWHAERIINAVNDAVKSMDDTEKMSMKLKELSIKHAQSFYVDRQYFKVLAGIIADTTAPGDAGFEKLMSMICILLSSAY.

The 140-residue stretch at proline 11 to tyrosine 150 folds into the Globin domain. Residues histidine 74 and histidine 106 each coordinate heme b.

This sequence belongs to the globin family. In terms of assembly, monomer.

This is Globin-1 from Mordacia mordax (Southern hemisphere lamprey).